The primary structure comprises 1362 residues: DNA-directed RNA polymerase subunit beta (1362 aa).

The protein belongs to the RNA polymerase beta chain family. In terms of assembly, the RNAP catalytic core consists of 2 alpha, 1 beta, 1 beta' and 1 omega subunit. When a sigma factor is associated with the core the holoenzyme is formed, which can initiate transcription.

It carries out the reaction RNA(n) + a ribonucleoside 5'-triphosphate = RNA(n+1) + diphosphate. In terms of biological role, DNA-dependent RNA polymerase catalyzes the transcription of DNA into RNA using the four ribonucleoside triphosphates as substrates. The chain is DNA-directed RNA polymerase subunit beta from Acinetobacter baylyi (strain ATCC 33305 / BD413 / ADP1).